A 343-amino-acid chain; its full sequence is Protein FAM50A-B (343 aa).

Disordered stretches follow at residues Met1 to Arg25 and Glu125 to Asn181. A compositionally biased stretch (acidic residues) spans Glu125 to Tyr142. The segment covering Pro172–Asn181 has biased composition (basic and acidic residues).

This sequence belongs to the FAM50 family.

The protein resides in the nucleus. Its function is as follows. Probably involved in the regulation of pre-mRNA splicing. This is Protein FAM50A-B (fam50a-b) from Xenopus laevis (African clawed frog).